Consider the following 502-residue polypeptide: Histidine--tRNA ligase (502 aa).

This sequence belongs to the class-II aminoacyl-tRNA synthetase family. Homodimer.

The protein localises to the cytoplasm. The enzyme catalyses tRNA(His) + L-histidine + ATP = L-histidyl-tRNA(His) + AMP + diphosphate + H(+). The sequence is that of Histidine--tRNA ligase (hisS) from Brucella suis biovar 1 (strain 1330).